We begin with the raw amino-acid sequence, 473 residues long: MAVKSYQAGVTQYRQSYWQPDYMPLDTDILACFKITPQPGVDREEAAAAVAAESSCGTWTTVWTDLLTDLDYYKGRAYRLEDVPGDDTCYYAFIAYPIDLFEEGSVVNVFTSLVGNVFGFKAVRALRLEDLRFPIAYVKTCGGPPHGIQVERDKLNKYGRPLLGCTIKPKLGLSAKNYGRACYEALRGGLDFTKDDENINSQPFMRWRDRFDFVMEAVQKAEQETGERKGHYLNVTAPTPEEMYKRAEYAKEIRAPIIMHDYLAGGLCANAGLANWCRNNGMLLHIHRAMHAVIDRNPHHGIHFRVLTKILRPSGGDHLHTGTVVGKLEGDRASTLGWIDLLRESFVPEDRSRGIFFDQDWGSMPGGFAVASGGIHVWHMPALVTIFGDDSVLQFGGGTLGHPWGNAAGAHANRVALEACVQARGEGRHLEKEGKDILTAAAAQSPELKIAMETWKEIKFEFETMDKLAIANK.

Asn-116 and Thr-166 together coordinate substrate. Lys-168 (proton acceptor) is an active-site residue. Substrate is bound at residue Lys-170. The Mg(2+) site is built by Lys-194, Asp-196, and Glu-197. Position 194 is an N6-carboxylysine (Lys-194). The active-site Proton acceptor is the His-287. Substrate contacts are provided by Arg-288, His-320, and Ser-372.

The protein belongs to the RuBisCO large chain family. Type I subfamily. In terms of assembly, heterohexadecamer of 8 large chains and 8 small chains. Mg(2+) is required as a cofactor.

The catalysed reaction is 2 (2R)-3-phosphoglycerate + 2 H(+) = D-ribulose 1,5-bisphosphate + CO2 + H2O. The enzyme catalyses D-ribulose 1,5-bisphosphate + O2 = 2-phosphoglycolate + (2R)-3-phosphoglycerate + 2 H(+). Functionally, ruBisCO catalyzes two reactions: the carboxylation of D-ribulose 1,5-bisphosphate, the primary event in carbon dioxide fixation, as well as the oxidative fragmentation of the pentose substrate. Both reactions occur simultaneously and in competition at the same active site. This Nitrobacter winogradskyi (Nitrobacter agilis) protein is Ribulose bisphosphate carboxylase large chain.